A 164-amino-acid polypeptide reads, in one-letter code: Deoxyuridine 5'-triphosphate nucleotidohydrolase (164 aa).

Substrate is bound by residues 66-68 (RSG), N79, 83-85 (TVD), and K93.

Belongs to the dUTPase family. The cofactor is Mg(2+).

The catalysed reaction is dUTP + H2O = dUMP + diphosphate + H(+). It functions in the pathway pyrimidine metabolism; dUMP biosynthesis; dUMP from dCTP (dUTP route): step 2/2. In terms of biological role, this enzyme is involved in nucleotide metabolism: it produces dUMP, the immediate precursor of thymidine nucleotides and it decreases the intracellular concentration of dUTP so that uracil cannot be incorporated into DNA. This is Deoxyuridine 5'-triphosphate nucleotidohydrolase from Rhodococcus erythropolis (strain PR4 / NBRC 100887).